Consider the following 426-residue polypeptide: Probable alpha-galactosidase B (426 aa).

Residues 1 to 13 (MSRSKTRQGKLPA) form the signal peptide. Cystine bridges form between Cys-24-Cys-56 and Cys-106-Cys-136. The active-site Nucleophile is Asp-134. N-linked (GlcNAc...) asparagine glycosylation is found at Asn-141 and Asn-159. 204-208 (EWGQA) serves as a coordination point for substrate. An N-linked (GlcNAc...) asparagine glycan is attached at Asn-215. The active-site Proton donor is the Asp-226. The N-linked (GlcNAc...) asparagine glycan is linked to Asn-265.

This sequence belongs to the glycosyl hydrolase 27 family.

Its subcellular location is the secreted. It catalyses the reaction Hydrolysis of terminal, non-reducing alpha-D-galactose residues in alpha-D-galactosides, including galactose oligosaccharides, galactomannans and galactolipids.. In terms of biological role, hydrolyzes a variety of simple alpha-D-galactoside as well as more complex molecules such as oligosaccharides and polysaccharides. The sequence is that of Probable alpha-galactosidase B (aglB) from Aspergillus fumigatus (strain CBS 144.89 / FGSC A1163 / CEA10) (Neosartorya fumigata).